Reading from the N-terminus, the 571-residue chain is Cytoplasmic polyadenylation element-binding protein 2 (571 aa).

Disordered stretches follow at residues 1–23 and 51–75; these read MSKS…NGDR and FKQN…VSQE. The span at 61–75 shows a compositional bias: basic and acidic residues; it reads SESRHENEENKVSQE. The RRM domain maps to 435–517; that stretch reads LVAFIGGVPR…KRVEIKPYFF (83 aa).

In terms of biological role, cytoplasmic polyadenylation element binding protein that binds to and regulates the translation of specific mRNAs. The protein is Cytoplasmic polyadenylation element-binding protein 2 (cpb-2) of Caenorhabditis remanei (Caenorhabditis vulgaris).